Here is a 147-residue protein sequence, read N- to C-terminus: Small ribosomal subunit protein uS12 (147 aa).

Belongs to the universal ribosomal protein uS12 family. As to quaternary structure, part of the 30S ribosomal subunit.

In terms of biological role, with S4 and S5 plays an important role in translational accuracy. Located at the interface of the 30S and 50S subunits. The polypeptide is Small ribosomal subunit protein uS12 (Thermococcus celer).